The following is a 722-amino-acid chain: NCK-interacting protein with SH3 domain (722 aa).

In terms of domain architecture, SH3 spans 1-58; it reads MYRALYAFRSAEPNALAFAAGETFLVLERSSAHWWLAARARSGETGYVPPAYLRRLQG. Disordered stretches follow at residues 101–122 and 149–286; these read KETL…SSTS and PSSE…ASDD. Residues 110-121 show a composition bias toward low complexity; it reads SASSVAVMTSST. Serine 120 carries the post-translational modification Phosphoserine. The segment covering 169–185 has biased composition (pro residues); sequence QIPPQPRRAAPTTPPPP. Positions 175–192 match the Nuclear localization signal motif; it reads RRAAPTTPPPPVKRRDRE. Threonine 181 bears the Phosphothreonine mark. Low complexity predominate over residues 206–240; it reads PSGGNSVSSGSSVSSTSLDTLYTSSSPSEPGSSCS. Phosphoserine is present on serine 294.

As to quaternary structure, associates with the intermediate filaments, vimentin and desmin. Binds the first and third SH3 domains of NCK. Binds the proline-rich domains of N-WASP through its SH3 domain. Similarly, binds diaphanous protein homolog 1 (DRF1). Binds the SH3 domains of GRB2 through its proline-rich domains. Interacts with Helicobacter pylori toxin vacA. Isoform 4 interacts with FHOD1. Interacts with FASLG. Interacts with TMIGD2. Highest expression in heart, brain, skeletal muscle, kidney and liver. Lower levels in placenta, lung, small intestine and leukocytes. Weak expression in colon, thymus and spleen.

The protein localises to the nucleus. In terms of biological role, has an important role in stress fiber formation induced by active diaphanous protein homolog 1 (DRF1). Induces microspike formation, in vivo. In vitro, stimulates N-WASP-induced ARP2/3 complex activation in the absence of CDC42. May play an important role in the maintenance of sarcomeres and/or in the assembly of myofibrils into sarcomeres. Implicated in regulation of actin polymerization and cell adhesion. Plays a role in angiogenesis. The sequence is that of NCK-interacting protein with SH3 domain (NCKIPSD) from Homo sapiens (Human).